We begin with the raw amino-acid sequence, 1025 residues long: Presequence protease, mitochondrial (1025 aa).

H90 is a Zn(2+) binding site. Catalysis depends on E93, which acts as the Proton acceptor. H94 is a Zn(2+) binding site. E166 is a catalytic residue. E197 is a Zn(2+) binding site.

Belongs to the peptidase M16 family. PreP subfamily. As to quaternary structure, monomer and homodimer; homodimerization is induced by binding of the substrate. Zn(2+) is required as a cofactor.

Its subcellular location is the mitochondrion intermembrane space. The protein localises to the mitochondrion matrix. Degrades mitochondrial transit peptides after their cleavage in the intermembrane space or in the matrix, and presequence peptides; clearance of these peptides is required to keep the presequence processing machinery running. Preferentially cleaves the N-terminal side of paired basic amino acid residues. Also degrades other unstructured peptides. May function as an ATP-dependent peptidase as opposed to a metalloendopeptidase. This is Presequence protease, mitochondrial (cym1) from Aspergillus oryzae (strain ATCC 42149 / RIB 40) (Yellow koji mold).